A 176-amino-acid polypeptide reads, in one-letter code: MSVLLRSVTELCPVYSPFFGSMGITASIVFTVFGGAYGTAKSSVGISSVGVMKPEFIMRSLFPVVFAGVIGLYGLIVCIVLFINVNKSEYSLNRAFLDLGAGLTCGLCGLASGMSIGISGDCGVRGAAQQPKLFVSMLICLIFSEALALYGFIVALIMAATGDNSCVATASTSSSS.

The Lumenal segment spans residues 1–17; that stretch reads MSVLLRSVTELCPVYSP. The helical transmembrane segment at 18–38 threads the bilayer; the sequence is FFGSMGITASIVFTVFGGAYG. Over 39–62 the chain is Cytoplasmic; sequence TAKSSVGISSVGVMKPEFIMRSLF. Residues 63–83 form a helical membrane-spanning segment; it reads PVVFAGVIGLYGLIVCIVLFI. The Lumenal portion of the chain corresponds to 84–98; sequence NVNKSEYSLNRAFLD. A helical membrane pass occupies residues 99–119; it reads LGAGLTCGLCGLASGMSIGIS. Topologically, residues 120–136 are cytoplasmic; that stretch reads GDCGVRGAAQQPKLFVS. The chain crosses the membrane as a helical span at residues 137–157; it reads MLICLIFSEALALYGFIVALI. Topologically, residues 158–176 are lumenal; the sequence is MAATGDNSCVATASTSSSS.

This sequence belongs to the V-ATPase proteolipid subunit family. In terms of assembly, V-ATPase is a heteromultimeric enzyme composed of a peripheral catalytic V1 complex (main components: subunits A, B, C, D, E, and F) attached to an integral membrane V0 proton pore complex (main component: the proteolipid protein; which is present as a hexamer that forms the proton-conducting pore).

It is found in the vacuole membrane. Its function is as follows. Proton-conducting pore forming subunit of the membrane integral V0 complex of vacuolar ATPase. V-ATPase is responsible for acidifying a variety of intracellular compartments in eukaryotic cells. This chain is V-type proton ATPase 16 kDa proteolipid subunit (VMA3), found in Entamoeba dispar.